Consider the following 469-residue polypeptide: Glutamate--tRNA ligase (469 aa).

Residues 9 to 19 carry the 'HIGH' region motif; that stretch reads PSPTGFLHVGG. Zn(2+) contacts are provided by Cys98, Cys100, Cys125, and Asp127. The 'KMSKS' region signature appears at 236-240; it reads KLSKR. Lys239 is an ATP binding site.

The protein belongs to the class-I aminoacyl-tRNA synthetase family. Glutamate--tRNA ligase type 1 subfamily. In terms of assembly, monomer. It depends on Zn(2+) as a cofactor.

The protein resides in the cytoplasm. The catalysed reaction is tRNA(Glu) + L-glutamate + ATP = L-glutamyl-tRNA(Glu) + AMP + diphosphate. Its function is as follows. Catalyzes the attachment of glutamate to tRNA(Glu) in a two-step reaction: glutamate is first activated by ATP to form Glu-AMP and then transferred to the acceptor end of tRNA(Glu). This chain is Glutamate--tRNA ligase, found in Shewanella halifaxensis (strain HAW-EB4).